The sequence spans 384 residues: DNA repair protein RAD51 homolog 2 (384 aa).

The tract at residues 1–75 (MGSKKLKRVG…TAYGIKAQRS (75 aa)) is interaction with RAD51C. Position 108-115 (108-115 (GPPGCGKT)) interacts with ATP.

It belongs to the RecA family. RAD51 subfamily. In terms of assembly, part of the BCDX2 complex consisting of RAD51B, RAD51C, RAD51D and XRCC2; the complex has a ring-like structure arranged into a flat disc around a central channel. The BCDX2 subcomplex RAD51B:RAD51C interacts with RAD51. Interacts with SWSAP1; involved in homologous recombination repair. Interacts with HELQ. In terms of processing, phosphorylated on tyrosine residues by BCR-ABL. As to expression, expressed in a wide range of tissues.

It is found in the nucleus. Its function is as follows. Involved in the homologous recombination repair (HRR) pathway of double-stranded DNA breaks arising during DNA replication or induced by DNA-damaging agents. May promote the assembly of presynaptic RAD51 nucleoprotein filaments. Binds single-stranded DNA and double-stranded DNA and has DNA-dependent ATPase activity. Part of the RAD51 paralog protein complex BCDX2 which acts in the BRCA1-BRCA2-dependent HR pathway. Upon DNA damage, BCDX2 acts downstream of BRCA2 recruitment and upstream of RAD51 recruitment. BCDX2 binds predominantly to the intersection of the four duplex arms of the Holliday junction and to junction of replication forks. The BCDX2 complex was originally reported to bind single-stranded DNA, single-stranded gaps in duplex DNA and specifically to nicks in duplex DNA. The BCDX2 subcomplex RAD51B:RAD51C exhibits single-stranded DNA-dependent ATPase activity suggesting an involvement in early stages of the HR pathway. The sequence is that of DNA repair protein RAD51 homolog 2 (RAD51B) from Homo sapiens (Human).